A 159-amino-acid polypeptide reads, in one-letter code: Phosphopantetheine adenylyltransferase (159 aa).

Serine 9 provides a ligand contact to substrate. Residues 9-10 and histidine 17 contribute to the ATP site; that span reads SF. Residues lysine 41, leucine 73, and arginine 87 each coordinate substrate. Residues 88–90, glutamate 98, and 123–129 each bind ATP; these read GLR and YSYVSSS.

Belongs to the bacterial CoaD family. Homohexamer. Requires Mg(2+) as cofactor.

The protein localises to the cytoplasm. It carries out the reaction (R)-4'-phosphopantetheine + ATP + H(+) = 3'-dephospho-CoA + diphosphate. It participates in cofactor biosynthesis; coenzyme A biosynthesis; CoA from (R)-pantothenate: step 4/5. Functionally, reversibly transfers an adenylyl group from ATP to 4'-phosphopantetheine, yielding dephospho-CoA (dPCoA) and pyrophosphate. This is Phosphopantetheine adenylyltransferase from Shouchella clausii (strain KSM-K16) (Alkalihalobacillus clausii).